Reading from the N-terminus, the 240-residue chain is UDP-2,3-diacylglucosamine hydrolase (240 aa).

Positions 8, 10, 41, 79, and 114 each coordinate Mn(2+). Position 79–80 (79–80 (NR)) interacts with substrate. Asp-122, Ser-160, Asn-164, Lys-167, and His-195 together coordinate substrate. His-195 and His-197 together coordinate Mn(2+).

Belongs to the LpxH family. The cofactor is Mn(2+).

It localises to the cell inner membrane. It catalyses the reaction UDP-2-N,3-O-bis[(3R)-3-hydroxytetradecanoyl]-alpha-D-glucosamine + H2O = 2-N,3-O-bis[(3R)-3-hydroxytetradecanoyl]-alpha-D-glucosaminyl 1-phosphate + UMP + 2 H(+). It participates in glycolipid biosynthesis; lipid IV(A) biosynthesis; lipid IV(A) from (3R)-3-hydroxytetradecanoyl-[acyl-carrier-protein] and UDP-N-acetyl-alpha-D-glucosamine: step 4/6. In terms of biological role, hydrolyzes the pyrophosphate bond of UDP-2,3-diacylglucosamine to yield 2,3-diacylglucosamine 1-phosphate (lipid X) and UMP by catalyzing the attack of water at the alpha-P atom. Involved in the biosynthesis of lipid A, a phosphorylated glycolipid that anchors the lipopolysaccharide to the outer membrane of the cell. The sequence is that of UDP-2,3-diacylglucosamine hydrolase from Pectobacterium carotovorum subsp. carotovorum (strain PC1).